The chain runs to 322 residues: MAASRSLVPDRLRLPLCFLGVFVCYFYYGILQEKITRGKYGEGPKQETFTFALTLVFIQCVINAMFAKILIQFFDTARVDRTRTWLYAACSVSYVGAMVSSNSALQFVNYPTQVLGKSCKPIPVMLLGVTLLKKKYPLAKYLCVLLIVAGVALFMYKPKKVVGIEEHTVGFGELLLLMSLTLDGLTGVSQDHMRAHYQTGSNHMMLNINLWSTFLLGAGILFTGELWEFLSFAERYPTIIYNILLFGLTSALGQSFIFMTVVYFGPLTCSIITTTRKFFTILASVILFANPISSMQWVGTVLVFLGLGLDAKFGKGTKKTSH.

8 helical membrane passes run 12 to 32 (LRLP…GILQ), 51 to 71 (FALT…KILI), 85 to 105 (WLYA…NSAL), 136 to 156 (YPLA…LFMY), 168 to 188 (TVGF…LTGV), 210 to 230 (LWST…WEFL), 243 to 263 (ILLF…TVVY), and 285 to 305 (VILF…LVFL). The Di-lysine motif motif lies at 318 to 322 (KKTSH).

It belongs to the nucleotide-sugar transporter family. SLC35B subfamily.

It localises to the endoplasmic reticulum membrane. The catalysed reaction is ADP(in) + ATP(out) = ADP(out) + ATP(in). It carries out the reaction UDP(out) + ATP(in) = UDP(in) + ATP(out). The enzyme catalyses UTP(out) + ATP(in) = UTP(in) + ATP(out). It catalyses the reaction dATP(out) + ATP(in) = dATP(in) + ATP(out). ATP:ADP antiporter that catalyzes the exchange of ATP and ADP across the endoplasmic reticulum (ER) membrane. Imports ATP from the cytosol to the ER lumen and exports ADP in the opposite direction. Regulates ER energy metabolism and protein biogenesis. Appears to be part of a calcium-dependent ER to cytosol low energy response axis, where calcium efflux from ER to the cytosol triggers ATP import into the ER lumen to maintain sufficient ATP supply. Provides ATP to ER chaperone HSPA5 that drives protein folding and trafficking in the ER. Can transport dATP, UTP or UDP in exchange for ATP, but the physiological relevance of this process remains to be established. The sequence is that of Solute carrier family 35 member B1 (Slc35b1) from Mus musculus (Mouse).